The sequence spans 415 residues: Multidrug resistance protein MdtA (415 aa).

A signal peptide spans 1–21 (MKSTVKKRGWVIAGIVVVALA). Residues 387-415 (AQTAADAAKPERGERAPTDSARAAKGARS) form a disordered region. Basic and acidic residues predominate over residues 394 to 403 (AKPERGERAP).

Belongs to the membrane fusion protein (MFP) (TC 8.A.1) family. Part of a tripartite efflux system composed of MdtA, MdtB and MdtC.

It localises to the cell inner membrane. The polypeptide is Multidrug resistance protein MdtA (Cronobacter turicensis (strain DSM 18703 / CCUG 55852 / LMG 23827 / z3032)).